An 818-amino-acid chain; its full sequence is Serine/threonine-protein kinase PTK2/STK2 (818 aa).

Residues 28–39 show a composition bias toward polar residues; the sequence is NSSSHTDNSSLL. Disordered stretches follow at residues 28 to 100 and 117 to 177; these read NSSS…GSVS and NPYL…SHHF. Thr56 bears the Phosphothreonine mark. The span at 57-81 shows a compositional bias: low complexity; that stretch reads SPSISGSGSGGNSPSSSAGARQRSA. Residues Ser59 and Ser80 each carry the phosphoserine modification. Residues 136 to 160 are compositionally biased toward basic and acidic residues; sequence TRDRDRAVLDREKEKERARNKERNT. The Protein kinase domain occupies 255-562; it reads DTDNKPIGSG…MDDLFNDPFF (308 aa). Residues 261 to 269 and Lys285 contribute to the ATP site; that span reads IGSGGSSEV. Asp388 functions as the Proton acceptor in the catalytic mechanism. Residues 585-595 are compositionally biased toward polar residues; sequence STSTNDFSENS. Residues 585–795 form a disordered region; the sequence is STSTNDFSEN…SVSSSKKKKV (211 aa). 2 positions are modified to phosphoserine: Ser623 and Ser632. 2 stretches are compositionally biased toward basic and acidic residues: residues 638-651 and 659-685; these read KVKD…HDVG and TKPK…KVIE. Ser694 bears the Phosphoserine mark. Residue Thr700 is modified to Phosphothreonine. At Ser711 the chain carries Phosphoserine. Residues 727 to 736 are compositionally biased toward low complexity; the sequence is TPTTPTHNGP. Residue Thr737 is modified to Phosphothreonine. Residues Ser752, Ser755, Ser778, and Ser781 each carry the phosphoserine modification. The segment covering 755 to 767 has biased composition (polar residues); that stretch reads SLKSETPASTKNF. Residues 768–789 are compositionally biased toward low complexity; that stretch reads SAPNVSSSSNSLRSLGSPSVSS.

Belongs to the protein kinase superfamily. Ser/Thr protein kinase family.

The protein resides in the nucleus. Its subcellular location is the cytoplasm. It carries out the reaction L-seryl-[protein] + ATP = O-phospho-L-seryl-[protein] + ADP + H(+). The catalysed reaction is L-threonyl-[protein] + ATP = O-phospho-L-threonyl-[protein] + ADP + H(+). Essential determinant for high-affinity spermidine transport. Required for the activation of the plasma membrane proton pump PMA1 via phosphorylation of 'Ser-899'. This chain is Serine/threonine-protein kinase PTK2/STK2 (PTK2), found in Saccharomyces cerevisiae (strain ATCC 204508 / S288c) (Baker's yeast).